A 226-amino-acid chain; its full sequence is Uridylate kinase (226 aa).

6 to 10 (KISGK) provides a ligand contact to ATP. Residue G43 coordinates UMP. ATP is bound by residues G44 and R48. Residues D65 and 113–119 (FQPGQST) each bind UMP. 4 residues coordinate ATP: T139, N140, Y145, and D148.

The protein belongs to the UMP kinase family. Homohexamer.

The protein resides in the cytoplasm. It carries out the reaction UMP + ATP = UDP + ADP. Its pathway is pyrimidine metabolism; CTP biosynthesis via de novo pathway; UDP from UMP (UMPK route): step 1/1. Inhibited by UTP. Its function is as follows. Catalyzes the reversible phosphorylation of UMP to UDP. The protein is Uridylate kinase of Saccharolobus islandicus (strain M.16.27) (Sulfolobus islandicus).